A 148-amino-acid polypeptide reads, in one-letter code: Lysozyme C (148 aa).

Positions 1-18 are cleaved as a signal peptide; that stretch reads MKAVIILGLVLLSVTVQG. The C-type lysozyme domain maps to 19 to 148; it reads KIFERCELAR…VSQYVQGCGV (130 aa). Cystine bridges form between Cys-24-Cys-146, Cys-48-Cys-134, Cys-83-Cys-99, and Cys-95-Cys-113. Residues Glu-53 and Asp-71 contribute to the active site.

This sequence belongs to the glycosyl hydrolase 22 family. In terms of assembly, monomer.

The protein localises to the secreted. It catalyses the reaction Hydrolysis of (1-&gt;4)-beta-linkages between N-acetylmuramic acid and N-acetyl-D-glucosamine residues in a peptidoglycan and between N-acetyl-D-glucosamine residues in chitodextrins.. In terms of biological role, lysozymes have primarily a bacteriolytic function; those in tissues and body fluids are associated with the monocyte-macrophage system and enhance the activity of immunoagents. In Macaca mulatta (Rhesus macaque), this protein is Lysozyme C (LYZ).